Consider the following 95-residue polypeptide: Secretoglobin family 2A member 2 (95 aa).

An N-terminal signal peptide occupies residues 1–18; it reads MKLVFLFLLVTIPICCYA. N35 is a glycosylation site (N-linked (GlcNAc...) asparagine).

This sequence belongs to the secretoglobin family. Lipophilin subfamily. In terms of assembly, prostatein is composed of three different peptides called C1, C2 and C3. These form covalent C1:C3 (F) and C2:C3 (S) heterodimers whose non-covalent association forms tetrameric (C1:C3/C3:C2) prostatein molecules. As to expression, highly expressed in ventral prostate.

It is found in the secreted. Functionally, part of prostatein which is the major secretory glycoprotein of ventral prostate gland. Steroid-binding protein; can bind non-polar steroids, cholesterol and a group of small proline-rich peptides. This is Secretoglobin family 2A member 2 (Scgb2a2) from Rattus norvegicus (Rat).